We begin with the raw amino-acid sequence, 213 residues long: Na(+)-translocating NADH-quinone reductase subunit E (213 aa).

The next 6 membrane-spanning stretches (helical) occupy residues 12-32 (AVFV…FLAV), 40-60 (IGLG…NQLI), 92-112 (FLGF…LEMF), 124-144 (LGIF…SLFM), 155-175 (VVFG…LAGI), and 191-211 (LGIT…FSGI).

This sequence belongs to the NqrDE/RnfAE family. As to quaternary structure, composed of six subunits; NqrA, NqrB, NqrC, NqrD, NqrE and NqrF.

It localises to the cell inner membrane. It carries out the reaction a ubiquinone + n Na(+)(in) + NADH + H(+) = a ubiquinol + n Na(+)(out) + NAD(+). Its function is as follows. NQR complex catalyzes the reduction of ubiquinone-1 to ubiquinol by two successive reactions, coupled with the transport of Na(+) ions from the cytoplasm to the periplasm. NqrA to NqrE are probably involved in the second step, the conversion of ubisemiquinone to ubiquinol. The sequence is that of Na(+)-translocating NADH-quinone reductase subunit E from Rhodopirellula baltica (strain DSM 10527 / NCIMB 13988 / SH1).